Consider the following 329-residue polypeptide: GMP reductase (329 aa).

The Thioimidate intermediate role is filled by Cys178. 207 to 230 (VIADGGIRTHGDIAKSIRMGATMV) serves as a coordination point for NADP(+).

The protein belongs to the IMPDH/GMPR family. GuaC type 2 subfamily.

The enzyme catalyses IMP + NH4(+) + NADP(+) = GMP + NADPH + 2 H(+). Catalyzes the irreversible NADPH-dependent deamination of GMP to IMP. It functions in the conversion of nucleobase, nucleoside and nucleotide derivatives of G to A nucleotides, and in maintaining the intracellular balance of A and G nucleotides. This Lactococcus lactis subsp. cremoris (strain SK11) protein is GMP reductase.